The chain runs to 81 residues: uncharacterized protein (81 aa).

To M.thermoautotrophicum MTH886.

This is an uncharacterized protein from Methanocaldococcus jannaschii (strain ATCC 43067 / DSM 2661 / JAL-1 / JCM 10045 / NBRC 100440) (Methanococcus jannaschii).